A 111-amino-acid chain; its full sequence is UPF0122 protein YofM (111 aa).

The protein belongs to the UPF0122 family.

In terms of biological role, might take part in the signal recognition particle (SRP) pathway. This is inferred from the conservation of its genetic proximity to ftsY/ffh. May be a regulatory protein. This is UPF0122 protein YofM (yofM) from Lactococcus lactis subsp. lactis (strain IL1403) (Streptococcus lactis).